We begin with the raw amino-acid sequence, 194 residues long: Large ribosomal subunit protein bL9 (194 aa).

Positions 165–194 are disordered; it reads PEDAEEAVANEEEAEAALLDDEDADEYEQG. The segment covering 166-194 has biased composition (acidic residues); that stretch reads EDAEEAVANEEEAEAALLDDEDADEYEQG.

Belongs to the bacterial ribosomal protein bL9 family.

Its function is as follows. Binds to the 23S rRNA. In Rhodospirillum rubrum (strain ATCC 11170 / ATH 1.1.1 / DSM 467 / LMG 4362 / NCIMB 8255 / S1), this protein is Large ribosomal subunit protein bL9.